The chain runs to 451 residues: Methylenetetrahydrofolate--tRNA-(uracil-5-)-methyltransferase TrmFO (451 aa).

10–15 (GGGLAG) is a binding site for FAD.

Belongs to the MnmG family. TrmFO subfamily. FAD is required as a cofactor.

The protein localises to the cytoplasm. It catalyses the reaction uridine(54) in tRNA + (6R)-5,10-methylene-5,6,7,8-tetrahydrofolate + NADH + H(+) = 5-methyluridine(54) in tRNA + (6S)-5,6,7,8-tetrahydrofolate + NAD(+). It carries out the reaction uridine(54) in tRNA + (6R)-5,10-methylene-5,6,7,8-tetrahydrofolate + NADPH + H(+) = 5-methyluridine(54) in tRNA + (6S)-5,6,7,8-tetrahydrofolate + NADP(+). Its function is as follows. Catalyzes the folate-dependent formation of 5-methyl-uridine at position 54 (M-5-U54) in all tRNAs. This chain is Methylenetetrahydrofolate--tRNA-(uracil-5-)-methyltransferase TrmFO, found in Anaeromyxobacter sp. (strain Fw109-5).